We begin with the raw amino-acid sequence, 255 residues long: MLQISHLYADYGGKPALEDINLTLESGELLVVLGPSGCGKTTLLNLIAGFVPYQHGSIQLAGKRIEGPGAERGVVFQNEGLLPWRNVQDNVAFGLQLAGIEKMQRLEIAHQVLKKVGLEGAEKRYIWQLSGGQRQRVGIARALAANPQLLLLDEPFGALDAFTRDQMQTLLLKLWQETGKQVLLITHDIEEAVFMATELVLLSSGPGRVLERLPLNFARRFVAGESSRSIKSDPQFIAMREYVLSRVFEQREAFS.

The 228-residue stretch at 2 to 229 folds into the ABC transporter domain; the sequence is LQISHLYADY…RFVAGESSRS (228 aa). Position 34–41 (34–41) interacts with ATP; that stretch reads GPSGCGKT.

It belongs to the ABC transporter superfamily. Taurine importer (TC 3.A.1.17.1) family. The complex is composed of two ATP-binding proteins (TauB), two transmembrane proteins (TauC) and a solute-binding protein (TauA).

The protein resides in the cell inner membrane. It carries out the reaction taurine(out) + ATP + H2O = taurine(in) + ADP + phosphate + H(+). Part of the ABC transporter complex TauABC involved in taurine import. Responsible for energy coupling to the transport system. The polypeptide is Taurine import ATP-binding protein TauB (Shigella boydii serotype 4 (strain Sb227)).